We begin with the raw amino-acid sequence, 163 residues long: Large ribosomal subunit protein uL10 (163 aa).

Belongs to the universal ribosomal protein uL10 family. In terms of assembly, part of the ribosomal stalk of the 50S ribosomal subunit. The N-terminus interacts with L11 and the large rRNA to form the base of the stalk. The C-terminus forms an elongated spine to which L12 dimers bind in a sequential fashion forming a multimeric L10(L12)X complex.

In terms of biological role, forms part of the ribosomal stalk, playing a central role in the interaction of the ribosome with GTP-bound translation factors. The polypeptide is Large ribosomal subunit protein uL10 (Actinobacillus succinogenes (strain ATCC 55618 / DSM 22257 / CCUG 43843 / 130Z)).